Reading from the N-terminus, the 147-residue chain is Hemoglobin subunit beta (147 aa).

An N-acetylvaline modification is found at Val2. The region spanning 3 to 147 is the Globin domain; sequence HLTGEEKAAV…VANALAHKYH (145 aa). Thr13 is subject to Phosphothreonine. The residue at position 45 (Ser45) is a Phosphoserine. An N6-acetyllysine modification is found at Lys60. His64 lines the heme b pocket. Lys83 carries the N6-acetyllysine modification. Position 93 (His93) interacts with heme b. Residue Cys94 is modified to S-nitrosocysteine. An N6-acetyllysine modification is found at Lys145.

The protein belongs to the globin family. As to quaternary structure, heterotetramer of two alpha chains and two beta chains. In terms of tissue distribution, red blood cells.

In terms of biological role, involved in oxygen transport from the lung to the various peripheral tissues. This is Hemoglobin subunit beta (HBB) from Cheracebus torquatus (Collared titi monkey).